The primary structure comprises 400 residues: CCA-adding enzyme (400 aa).

The ATP site is built by Gly27 and Arg30. 2 residues coordinate CTP: Gly27 and Arg30. Residues Asp40 and Asp42 each coordinate Mg(2+). Residues Arg111, Asp154, Arg157, Arg160, and Arg163 each coordinate ATP. The CTP site is built by Arg111, Asp154, Arg157, Arg160, and Arg163.

It belongs to the tRNA nucleotidyltransferase/poly(A) polymerase family. Bacterial CCA-adding enzyme type 3 subfamily. As to quaternary structure, homodimer. It depends on Mg(2+) as a cofactor.

The enzyme catalyses a tRNA precursor + 2 CTP + ATP = a tRNA with a 3' CCA end + 3 diphosphate. It catalyses the reaction a tRNA with a 3' CCA end + 2 CTP + ATP = a tRNA with a 3' CCACCA end + 3 diphosphate. Functionally, catalyzes the addition and repair of the essential 3'-terminal CCA sequence in tRNAs without using a nucleic acid template. Adds these three nucleotides in the order of C, C, and A to the tRNA nucleotide-73, using CTP and ATP as substrates and producing inorganic pyrophosphate. tRNA 3'-terminal CCA addition is required both for tRNA processing and repair. Also involved in tRNA surveillance by mediating tandem CCA addition to generate a CCACCA at the 3' terminus of unstable tRNAs. While stable tRNAs receive only 3'-terminal CCA, unstable tRNAs are marked with CCACCA and rapidly degraded. This Bacillus pumilus (strain SAFR-032) protein is CCA-adding enzyme.